Reading from the N-terminus, the 388-residue chain is Succinate--CoA ligase [ADP-forming] subunit beta (388 aa).

The region spanning 9–244 (KEILRKYNVP…LDEEDANEIE (236 aa)) is the ATP-grasp domain. ATP-binding positions include K46, 53-55 (GRG), E99, A102, and E107. 2 residues coordinate Mg(2+): N199 and D213. Residues N264 and 321–323 (GIM) contribute to the substrate site.

It belongs to the succinate/malate CoA ligase beta subunit family. As to quaternary structure, heterotetramer of two alpha and two beta subunits. The cofactor is Mg(2+).

It catalyses the reaction succinate + ATP + CoA = succinyl-CoA + ADP + phosphate. The enzyme catalyses GTP + succinate + CoA = succinyl-CoA + GDP + phosphate. Its pathway is carbohydrate metabolism; tricarboxylic acid cycle; succinate from succinyl-CoA (ligase route): step 1/1. Succinyl-CoA synthetase functions in the citric acid cycle (TCA), coupling the hydrolysis of succinyl-CoA to the synthesis of either ATP or GTP and thus represents the only step of substrate-level phosphorylation in the TCA. The beta subunit provides nucleotide specificity of the enzyme and binds the substrate succinate, while the binding sites for coenzyme A and phosphate are found in the alpha subunit. This chain is Succinate--CoA ligase [ADP-forming] subunit beta, found in Cupriavidus necator (strain ATCC 17699 / DSM 428 / KCTC 22496 / NCIMB 10442 / H16 / Stanier 337) (Ralstonia eutropha).